The primary structure comprises 853 residues: MSTIENFDAHTPMMQQYLKLKAQHPEILLFYRMGDFYELFYDDAKRASQLLDISLTKRGASAGEPIPMAGIPYHAVENYLAKLVNQGESVAICEQIGDPATSKGPVERKVVRIVTPGTISDEALLQERQDNLLAAIWQDSKGFGYATLDISSGRFRLSEPADRETMAAELQRTNPAELLYAEDFAEMSLIEGRRGLRRRPLWEFEIDTARQQLNLQFGTRDLVGFGVENAPRGLCAAGCLLQYAKDTQRTTLPHIRSITMERQQDSIIMDAATRRNLEITQNLAGGAENTLASVLDCTVTPMGSRMLKRWLHMPVRDTRVLLERQQTIGALQDFTAELQPVLRQVGDLERILARLALRTARPRDLARMRHAFQQLPELRAQLENVDSAPVQALREKMGEFAELRDLLERAIIDTPPVLVRDGGVIATGYNEELDEWRALADGATDYLERLEVRERERTGLDTLKVGFNAVHGYYIQISRGQSHLAPINYMRRQTLKNAERYIIPELKEYEDKVLTSKGKALALEKQLYEELFDLLLPHLEALQQSASALAELDVLVNLAERAYTLNYTCPTFIDKPGIRITEGRHPVVEQVLNEPFIANPLNLSPQRRMLIITGPNMGGKSTYMRQTALIALMAYIGSYVPAQKVEIGPIDRIFTRVGAADDLASGRSTFMVEMTETANILHNATEYSLVLMDEIGRGTSTYDGLSLAWACAENLANKIKALTLFATHYFELTQLPEKMEGVANVHLDALEHGDTIAFMHSVQDGAASKSYGLAVAALAGVPKEVIKRARQKLRELESISPNAAATQVDGTQMSLLSVPEETSPAVEALENLDPDSLTPRQALEWIYRLKSLV.

ATP is bound at residue 614–621 (GPNMGGKS).

Belongs to the DNA mismatch repair MutS family.

In terms of biological role, this protein is involved in the repair of mismatches in DNA. It is possible that it carries out the mismatch recognition step. This protein has a weak ATPase activity. In Escherichia coli O1:K1 / APEC, this protein is DNA mismatch repair protein MutS.